Reading from the N-terminus, the 151-residue chain is Probable ribonuclease P/MRP protein subunit POP5 (151 aa).

The protein belongs to the eukaryotic/archaeal RNase P protein component 2 family. Component of nuclear RNase P and RNase MRP ribonucleoproteins. Interacts with GAF1/RPP30.

The protein resides in the nucleus. Its subcellular location is the nucleolus. In terms of biological role, essential protein required during embryogenesis. Component of ribonuclease P, a protein complex that generates mature tRNA molecules by cleaving their 5'-ends. Also a component of RNase MRP. This is Probable ribonuclease P/MRP protein subunit POP5 (EMB1687) from Arabidopsis thaliana (Mouse-ear cress).